A 273-amino-acid chain; its full sequence is tRNA pseudouridine synthase A (273 aa).

Catalysis depends on aspartate 52, which acts as the Nucleophile. A substrate-binding site is contributed by tyrosine 110.

It belongs to the tRNA pseudouridine synthase TruA family. In terms of assembly, homodimer.

It carries out the reaction uridine(38/39/40) in tRNA = pseudouridine(38/39/40) in tRNA. In terms of biological role, formation of pseudouridine at positions 38, 39 and 40 in the anticodon stem and loop of transfer RNAs. The chain is tRNA pseudouridine synthase A from Cupriavidus pinatubonensis (strain JMP 134 / LMG 1197) (Cupriavidus necator (strain JMP 134)).